A 498-amino-acid chain; its full sequence is ATP synthase subunit beta, chloroplastic (498 aa).

172–179 (GGAGVGKT) lines the ATP pocket.

It belongs to the ATPase alpha/beta chains family. F-type ATPases have 2 components, CF(1) - the catalytic core - and CF(0) - the membrane proton channel. CF(1) has five subunits: alpha(3), beta(3), gamma(1), delta(1), epsilon(1). CF(0) has four main subunits: a(1), b(1), b'(1) and c(9-12).

Its subcellular location is the plastid. It localises to the chloroplast thylakoid membrane. The catalysed reaction is ATP + H2O + 4 H(+)(in) = ADP + phosphate + 5 H(+)(out). Produces ATP from ADP in the presence of a proton gradient across the membrane. The catalytic sites are hosted primarily by the beta subunits. The sequence is that of ATP synthase subunit beta, chloroplastic from Aristolochia macrophylla (Dutchman's pipe vine).